Reading from the N-terminus, the 299-residue chain is GTPase Era (299 aa).

Residues 5 to 175 form the Era-type G domain; that stretch reads RSGFVCFVGR…TDVLAGKLPP (171 aa). The segment at 13-20 is G1; it reads GRPNTGKS. A GTP-binding site is contributed by 13 to 20; the sequence is GRPNTGKS. The G2 stretch occupies residues 39-43; it reads QTTRH. Residues 60 to 63 form a G3 region; that stretch reads DTPG. GTP-binding positions include 60–64 and 124–127; these read DTPGL and TKID. The segment at 124–127 is G4; the sequence is TKID. The segment at 154 to 156 is G5; that stretch reads VSA. Residues 206-285 form the KH type-2 domain; it reads VRDELPHSLA…YLDLRVKIAK (80 aa).

The protein belongs to the TRAFAC class TrmE-Era-EngA-EngB-Septin-like GTPase superfamily. Era GTPase family. Monomer.

The protein resides in the cell envelope. It localises to the secreted. It is found in the cell wall. In terms of biological role, exhibits GTPase activity. Binds RNA but is probably not involved in ribosome assembly in mycobacteria. The protein is GTPase Era of Mycobacterium sp. (strain KMS).